The sequence spans 449 residues: Elongation factor 1-alpha (449 aa).

The 226-residue stretch at 5–230 folds into the tr-type G domain; the sequence is KVHMNLVVVG…DMLEPPVRPS (226 aa). Positions 14 to 21 are G1; sequence GHVDAGKS. 14 to 21 contributes to the GTP binding site; that stretch reads GHVDAGKS. The G2 stretch occupies residues 70-74; it reads GITID. A G3 region spans residues 91–94; it reads DAPG. GTP is bound by residues 91–95 and 153–156; these read DAPGH and NKMD. Positions 153–156 are G4; that stretch reads NKMD. A G5 region spans residues 194–196; that stretch reads SGW. Glu-362 is modified (5-glutamyl glycerylphosphorylethanolamine).

This sequence belongs to the TRAFAC class translation factor GTPase superfamily. Classic translation factor GTPase family. EF-Tu/EF-1A subfamily. In terms of processing, phosphatidylethanolamine (PE) is a direct precursor of the ethanolamine-phosphoglycerol (EPG) moiety.

The protein resides in the cytoplasm. In terms of biological role, this protein promotes the GTP-dependent binding of aminoacyl-tRNA to the A-site of ribosomes during protein biosynthesis. The polypeptide is Elongation factor 1-alpha (TEF1) (Trypanosoma brucei brucei).